The following is a 424-amino-acid chain: Splicing factor 3B subunit 4 (424 aa).

Ala2 bears the N-acetylalanine mark. RRM domains lie at 13–91 (ATVY…KASA) and 100–179 (ANIF…YAFK). Residue Tyr56 is modified to Phosphotyrosine. The disordered stretch occupies residues 207–424 (PHQLFADAPP…RGPLRGPLPQ (218 aa)). Residues 222–231 (NPVVSSLGSG) are compositionally biased toward low complexity. The segment covering 232-268 (LPPPGMPPPGSFPPPVPPPGALPPGIPPAMPPPPMPP) has biased composition (pro residues). Composition is skewed to low complexity over residues 269–280 (GAAGHGPPSAGT) and 303–323 (HPGMSQMQLAHHGPHGLGHPH). Composition is skewed to pro residues over residues 332 to 381 (QPPP…PLMP) and 388 to 424 (PPRPPPYGYQRGPLPPPRPTPRPPVPPRGPLRGPLPQ).

Belongs to the SF3B4 family. Component of the 17S U2 SnRNP complex, a ribonucleoprotein complex that contains small nuclear RNA (snRNA) U2 and a number of specific proteins. Part of the SF3B subcomplex of the 17S U2 SnRNP complex. SF3B associates with the splicing subcomplex SF3A and a 12S RNA unit to form the U2 small nuclear ribonucleoproteins complex (U2 snRNP). SF3B4 has been found in complex spliceosome 'B' and 'C' as well. Component of the minor (U12-type spliceosome) spliceosome. Found in a complex with PRMT9, SF3B2 and SF3B4.

It localises to the nucleus. In terms of biological role, component of the 17S U2 SnRNP complex of the spliceosome, a large ribonucleoprotein complex that removes introns from transcribed pre-mRNAs. The 17S U2 SnRNP complex (1) directly participates in early spliceosome assembly and (2) mediates recognition of the intron branch site during pre-mRNA splicing by promoting the selection of the pre-mRNA branch-site adenosine, the nucleophile for the first step of splicing. Within the 17S U2 SnRNP complex, SF3B4 is part of the SF3B subcomplex, which is required for 'A' complex assembly formed by the stable binding of U2 snRNP to the branchpoint sequence in pre-mRNA. Sequence independent binding of SF3A and SF3B subcomplexes upstream of the branch site is essential, it may anchor U2 snRNP to the pre-mRNA. May also be involved in the assembly of the 'E' complex. Also acts as a component of the minor spliceosome, which is involved in the splicing of U12-type introns in pre-mRNAs. The sequence is that of Splicing factor 3B subunit 4 (SF3B4) from Homo sapiens (Human).